A 586-amino-acid polypeptide reads, in one-letter code: Transcription elongation regulator 1-like protein (586 aa).

Residues 1 to 30 are disordered; the sequence is MQAGARFQRRRRQLQQQQPRRRQPLLWPMD. Positions 7–23 are enriched in basic residues; that stretch reads FQRRRRQLQQQQPRRRQ. Positions 148–181 constitute a WW 1 domain; it reads TPIGKSWIDKRIPNCKIFFNNSFALDSTWIHPEE. 2 disordered regions span residues 281–344 and 378–448; these read TSPV…PGSP and DLNR…QILL. Residues 306-317 show a composition bias toward basic and acidic residues; that stretch reads KSRDGDKEDKEP. In terms of domain architecture, WW 2 spans 339-372; sequence PVPGSPWCVVWTGDDRVFFFNPTMHLSVWEKPMD. Composition is skewed to basic and acidic residues over residues 378 to 387, 411 to 421, and 428 to 439; these read DLNRIIEDPP, DQDVKTKRNRT, and KPEEAKREDKGT. FF domains follow at residues 450–503 and 515–570; these read LEER…FVKT and KLLL…FILI.

This chain is Transcription elongation regulator 1-like protein (TCERG1L), found in Homo sapiens (Human).